The chain runs to 363 residues: tRNA N6-adenosine threonylcarbamoyltransferase (363 aa).

The Fe cation site is built by H121 and H125. Residues 143–147 (LASGG), D176, G189, and N287 each bind substrate. Fe cation is bound at residue D315.

This sequence belongs to the KAE1 / TsaD family. It depends on Fe(2+) as a cofactor.

It localises to the cytoplasm. The enzyme catalyses L-threonylcarbamoyladenylate + adenosine(37) in tRNA = N(6)-L-threonylcarbamoyladenosine(37) in tRNA + AMP + H(+). Its function is as follows. Required for the formation of a threonylcarbamoyl group on adenosine at position 37 (t(6)A37) in tRNAs that read codons beginning with adenine. Is involved in the transfer of the threonylcarbamoyl moiety of threonylcarbamoyl-AMP (TC-AMP) to the N6 group of A37, together with TsaE and TsaB. TsaD likely plays a direct catalytic role in this reaction. The polypeptide is tRNA N6-adenosine threonylcarbamoyltransferase (Rhodopseudomonas palustris (strain BisB5)).